A 482-amino-acid polypeptide reads, in one-letter code: Exodeoxyribonuclease 7 large subunit (482 aa).

Positions T457–F482 are disordered.

It belongs to the XseA family. In terms of assembly, heterooligomer composed of large and small subunits.

Its subcellular location is the cytoplasm. The catalysed reaction is Exonucleolytic cleavage in either 5'- to 3'- or 3'- to 5'-direction to yield nucleoside 5'-phosphates.. Bidirectionally degrades single-stranded DNA into large acid-insoluble oligonucleotides, which are then degraded further into small acid-soluble oligonucleotides. This Ruegeria pomeroyi (strain ATCC 700808 / DSM 15171 / DSS-3) (Silicibacter pomeroyi) protein is Exodeoxyribonuclease 7 large subunit.